The following is a 448-amino-acid chain: Bifunctional F420 biosynthesis protein FbiB (448 aa).

Positions 1–244 are coenzyme F420:L-glutamate ligase; it reads MTGPEHGSAS…PGANDLFWLG (244 aa). Residues 20-23, S50, and K55 contribute to the GTP site; that span reads LPEF. Residue D109 coordinates a divalent metal cation. N112 lines the GTP pocket. A divalent metal cation contacts are provided by D150 and T151. A dehydro-coenzyme F420-0 reductase region spans residues 245–448; the sequence is TAEALELGRQ…VPAADLLILK (204 aa). FMN-binding positions include 260–264 and A288; that span reads RRSVR. D320 provides a ligand contact to coenzyme F420-(gamma-Glu)n. Positions 399 and 436 each coordinate FMN.

This sequence in the N-terminal section; belongs to the CofE family. It depends on Mg(2+) as a cofactor. Mn(2+) is required as a cofactor. Requires K(+) as cofactor.

The catalysed reaction is oxidized coenzyme F420-0 + GTP + L-glutamate = oxidized coenzyme F420-1 + GDP + phosphate + H(+). The enzyme catalyses oxidized coenzyme F420-1 + GTP + L-glutamate = oxidized coenzyme F420-2 + GDP + phosphate + H(+). It carries out the reaction oxidized coenzyme F420-(gamma-L-Glu)(n) + GTP + L-glutamate = oxidized coenzyme F420-(gamma-L-Glu)(n+1) + GDP + phosphate + H(+). It catalyses the reaction oxidized coenzyme F420-0 + FMN + H(+) = dehydro coenzyme F420-0 + FMNH2. The protein operates within cofactor biosynthesis; coenzyme F420 biosynthesis. Bifunctional enzyme that catalyzes the GTP-dependent successive addition of multiple gamma-linked L-glutamates to the L-lactyl phosphodiester of 7,8-didemethyl-8-hydroxy-5-deazariboflavin (F420-0) to form polyglutamated F420 derivatives, and the FMNH2-dependent reduction of dehydro-F420-0 to form F420-0. The chain is Bifunctional F420 biosynthesis protein FbiB from Mycobacterium tuberculosis (strain ATCC 25177 / H37Ra).